We begin with the raw amino-acid sequence, 207 residues long: C-type lectin domain family 2 member D (207 aa).

Residues 1–41 (MCVTKASLPMLSPTGSPQEVEVGKILQGKRHGTISPESCAK) are Cytoplasmic-facing. Residues serine 7 and serine 12 each carry the phosphoserine modification. A helical; Signal-anchor for type II membrane protein membrane pass occupies residues 42–62 (LYCYYGVIMVLTVAVIALSVA). Over 63–207 (LSATKTEQIP…LHCQTPFFPS (145 aa)) the chain is Extracellular. Cysteine 80 and cysteine 91 are joined by a disulfide. Residues 87 to 202 (VENKCFYFSE…LNSYSLHCQT (116 aa)) enclose the C-type lectin domain. A glycan (N-linked (GlcNAc...) asparagine) is linked at asparagine 100.

As to quaternary structure, homodimer; disulfide-linked. Post-translationally, N-glycosylated. As to expression, detected in fetal heart, brain, lung, chondrocytes, perichondrium and osteoblasts, and in adult splenocytes, thymocytes, lymph-node cells, osteoblasts, growth plate chondrocytes and skeletal muscle overlying the bone (at protein level). Ubiquitous. Detected in thymus, bone marrow, lung, gut, heart, skeletal muscle, ovary, spleen, ileum, liver and kidney.

It localises to the cell membrane. In terms of biological role, receptor for KLRB1B that protects target cells against natural killer cell-mediated lysis. Inhibits osteoclast formation. Binds high molecular weight sulfated glycosaminoglycans. This chain is C-type lectin domain family 2 member D (Clec2d), found in Mus musculus (Mouse).